We begin with the raw amino-acid sequence, 256 residues long: Sugar fermentation stimulation protein homolog (256 aa).

Belongs to the SfsA family.

The sequence is that of Sugar fermentation stimulation protein homolog from Prochlorococcus marinus (strain MIT 9211).